The primary structure comprises 141 residues: Large ribosomal subunit protein uL11c (141 aa).

This sequence belongs to the universal ribosomal protein uL11 family. In terms of assembly, part of the ribosomal stalk of the 50S ribosomal subunit. Interacts with L10 and the large rRNA to form the base of the stalk. L10 forms an elongated spine to which L12 dimers bind in a sequential fashion forming a multimeric L10(L12)X complex.

The protein resides in the plastid. It is found in the chloroplast. Its function is as follows. Forms part of the ribosomal stalk which helps the ribosome interact with GTP-bound translation factors. This is Large ribosomal subunit protein uL11c from Guillardia theta (Cryptophyte).